We begin with the raw amino-acid sequence, 118 residues long: Large ribosomal subunit protein bL19 (118 aa).

It belongs to the bacterial ribosomal protein bL19 family.

This protein is located at the 30S-50S ribosomal subunit interface and may play a role in the structure and function of the aminoacyl-tRNA binding site. In Geobacter metallireducens (strain ATCC 53774 / DSM 7210 / GS-15), this protein is Large ribosomal subunit protein bL19.